We begin with the raw amino-acid sequence, 282 residues long: Deoxyribonuclease-1 (282 aa).

The first 22 residues, 1–22 (MRGARLTGALLALAGLLQVALS), serve as a signal peptide directing secretion. N40 carries N-linked (GlcNAc...) asparagine glycosylation. E100 is an active-site residue. C123 and C126 are disulfide-bonded. N128 is a glycosylation site (N-linked (GlcNAc...) asparagine). H156 is a catalytic residue. The cysteines at positions 195 and 231 are disulfide-linked.

The protein belongs to the DNase I family. Requires Ca(2+) as cofactor. Mg(2+) is required as a cofactor.

It is found in the secreted. Its subcellular location is the zymogen granule. The protein localises to the nucleus envelope. It carries out the reaction Endonucleolytic cleavage to 5'-phosphodinucleotide and 5'-phosphooligonucleotide end-products.. In terms of biological role, serum endocuclease secreted into body fluids by a wide variety of exocrine and endocrine organs. Expressed by non-hematopoietic tissues and preferentially cleaves protein-free DNA. Among other functions, seems to be involved in cell death by apoptosis. Binds specifically to G-actin and blocks actin polymerization. Together with DNASE1L3, plays a key role in degrading neutrophil extracellular traps (NETs). NETs are mainly composed of DNA fibers and are released by neutrophils to bind pathogens during inflammation. Degradation of intravascular NETs by DNASE1 and DNASE1L3 is required to prevent formation of clots that obstruct blood vessels and cause organ damage following inflammation. The sequence is that of Deoxyribonuclease-1 (DNASE1) from Equus caballus (Horse).